The primary structure comprises 823 residues: DNA mismatch repair protein MutS (823 aa).

605-612 (GPNMSGKS) provides a ligand contact to ATP.

The protein belongs to the DNA mismatch repair MutS family.

Its function is as follows. This protein is involved in the repair of mismatches in DNA. It is possible that it carries out the mismatch recognition step. This protein has a weak ATPase activity. This chain is DNA mismatch repair protein MutS, found in Fervidobacterium nodosum (strain ATCC 35602 / DSM 5306 / Rt17-B1).